Consider the following 383-residue polypeptide: Putative [LysW]-aminoadipate semialdehyde/glutamate semialdehyde transaminase (383 aa).

Residues 97–98 (GT) and F124 contribute to the pyridoxal 5'-phosphate site. R127 is a binding site for substrate. A pyridoxal 5'-phosphate-binding site is contributed by 209–212 (DEVQ). Position 238 is an N6-(pyridoxal phosphate)lysine (K238). S266 provides a ligand contact to substrate. A pyridoxal 5'-phosphate-binding site is contributed by T267.

Belongs to the class-III pyridoxal-phosphate-dependent aminotransferase family. LysJ subfamily. In terms of assembly, homodimer. The cofactor is pyridoxal 5'-phosphate.

The protein resides in the cytoplasm. It carries out the reaction [amino-group carrier protein]-C-terminal-gamma-(L-lysyl)-L-glutamate + 2-oxoglutarate = [amino-group carrier protein]-C-terminal-N-(1-carboxy-5-oxopentan-1-yl)-L-glutamine + L-glutamate. It catalyses the reaction [amino-group carrier protein]-C-terminal-gamma-(L-ornithyl)-L-glutamate + 2-oxoglutarate = [amino-group carrier protein]-C-terminal-gamma-(L-glutamyl-5-semialdehyde)-L-glutamate + L-glutamate. It participates in amino-acid biosynthesis; L-lysine biosynthesis via AAA pathway; L-lysine from L-alpha-aminoadipate (Thermus route): step 4/5. It functions in the pathway amino-acid biosynthesis; L-arginine biosynthesis. Involved in both the arginine and lysine biosynthetic pathways. This chain is Putative [LysW]-aminoadipate semialdehyde/glutamate semialdehyde transaminase, found in Pyrobaculum aerophilum (strain ATCC 51768 / DSM 7523 / JCM 9630 / CIP 104966 / NBRC 100827 / IM2).